A 159-amino-acid chain; its full sequence is MKITIAAVGKLKEKYLKEAVSEYSKRLSRFTEIEIIEVDDEYAPDSLSVAQESQVKKKEAERLLKRVKQGSYVVLLDLAGEQTTSSGFSAKLENVMLSGNSHITFIIGGSLGLDQSLIKVADYRLCLSKMTYPHQLARVILMEQIYRAFKIIKNETYHK.

S-adenosyl-L-methionine-binding positions include L76, G108, and 127-132 (LSKMTY).

This sequence belongs to the RNA methyltransferase RlmH family. As to quaternary structure, homodimer.

It localises to the cytoplasm. The enzyme catalyses pseudouridine(1915) in 23S rRNA + S-adenosyl-L-methionine = N(3)-methylpseudouridine(1915) in 23S rRNA + S-adenosyl-L-homocysteine + H(+). Its function is as follows. Specifically methylates the pseudouridine at position 1915 (m3Psi1915) in 23S rRNA. This is Ribosomal RNA large subunit methyltransferase H from Ruminiclostridium cellulolyticum (strain ATCC 35319 / DSM 5812 / JCM 6584 / H10) (Clostridium cellulolyticum).